The chain runs to 172 residues: Xanthine-guanine phosphoribosyltransferase (172 aa).

Residues 47–48 (RG) and 106–114 (DDLVDTGKT) each bind 5-phospho-alpha-D-ribose 1-diphosphate. Asp-107 serves as a coordination point for Mg(2+). Guanine contacts are provided by Asp-110 and Ile-153. Asp-110 and Ile-153 together coordinate xanthine. GMP contacts are provided by residues 110–114 (DTGKT) and 152–153 (WI).

This sequence belongs to the purine/pyrimidine phosphoribosyltransferase family. XGPT subfamily. As to quaternary structure, homotetramer. Mg(2+) is required as a cofactor.

The protein localises to the cell inner membrane. It carries out the reaction GMP + diphosphate = guanine + 5-phospho-alpha-D-ribose 1-diphosphate. The catalysed reaction is XMP + diphosphate = xanthine + 5-phospho-alpha-D-ribose 1-diphosphate. The enzyme catalyses IMP + diphosphate = hypoxanthine + 5-phospho-alpha-D-ribose 1-diphosphate. It participates in purine metabolism; GMP biosynthesis via salvage pathway; GMP from guanine: step 1/1. It functions in the pathway purine metabolism; XMP biosynthesis via salvage pathway; XMP from xanthine: step 1/1. In terms of biological role, purine salvage pathway enzyme that catalyzes the transfer of the ribosyl-5-phosphate group from 5-phospho-alpha-D-ribose 1-diphosphate (PRPP) to the N9 position of the 6-oxopurines guanine and xanthine to form the corresponding ribonucleotides GMP (guanosine 5'-monophosphate) and XMP (xanthosine 5'-monophosphate), with the release of PPi. To a lesser extent, also acts on hypoxanthine. In Rhodopseudomonas palustris (strain HaA2), this protein is Xanthine-guanine phosphoribosyltransferase.